The sequence spans 172 residues: Translation initiation factor IF-3 (172 aa).

The protein belongs to the IF-3 family. As to quaternary structure, monomer.

The protein localises to the cytoplasm. Its function is as follows. IF-3 binds to the 30S ribosomal subunit and shifts the equilibrium between 70S ribosomes and their 50S and 30S subunits in favor of the free subunits, thus enhancing the availability of 30S subunits on which protein synthesis initiation begins. This chain is Translation initiation factor IF-3, found in Geobacter metallireducens (strain ATCC 53774 / DSM 7210 / GS-15).